An 892-amino-acid polypeptide reads, in one-letter code: Translation initiation factor IF-2 (892 aa).

Disordered regions lie at residues 32–102 (LAQA…PGDA) and 114–300 (KAPE…KQAE). Over residues 35-48 (AGSSDTKNSPASKA) the composition is skewed to polar residues. Residues 139 to 166 (QEEKKESSEETSPERVEETLIIRTRTEP) show a composition bias toward basic and acidic residues. Over residues 200-211 (AASTEETTQQQP) the composition is skewed to low complexity. The segment covering 212–224 (RQNDAASYNNKQQ) has biased composition (polar residues). Low complexity predominate over residues 225 to 238 (PSGTSSRPASSAPS). Positions 252-276 (RGSERDRSKRSDESVKAFTGRDRYG) are enriched in basic and acidic residues. A tr-type G domain is found at 397-566 (IRSPIVAFMG…ALQAEVLELK (170 aa)). Residues 406-413 (GHVDHGKT) form a G1 region. Position 406-413 (406-413 (GHVDHGKT)) interacts with GTP. A G2 region spans residues 431 to 435 (AITQH). Residues 452-455 (DTPG) are G3. Residues 452–456 (DTPGH) and 506–509 (NKCD) each bind GTP. Positions 506 to 509 (NKCD) are G4. Residues 542-544 (SAK) are G5.

It belongs to the TRAFAC class translation factor GTPase superfamily. Classic translation factor GTPase family. IF-2 subfamily.

The protein resides in the cytoplasm. In terms of biological role, one of the essential components for the initiation of protein synthesis. Protects formylmethionyl-tRNA from spontaneous hydrolysis and promotes its binding to the 30S ribosomal subunits. Also involved in the hydrolysis of GTP during the formation of the 70S ribosomal complex. The protein is Translation initiation factor IF-2 of Chlamydia trachomatis serovar A (strain ATCC VR-571B / DSM 19440 / HAR-13).